We begin with the raw amino-acid sequence, 238 residues long: Uridylate kinase (238 aa).

12 to 15 (KLSG) contacts ATP. The tract at residues 20-25 (GDEGFG) is involved in allosteric activation by GTP. G54 serves as a coordination point for UMP. ATP is bound by residues G55 and R59. Residues D74 and 135–142 (TGSPFFTT) contribute to the UMP site. ATP contacts are provided by T162, Y168, and D171.

Belongs to the UMP kinase family. In terms of assembly, homohexamer.

Its subcellular location is the cytoplasm. It catalyses the reaction UMP + ATP = UDP + ADP. It participates in pyrimidine metabolism; CTP biosynthesis via de novo pathway; UDP from UMP (UMPK route): step 1/1. Its activity is regulated as follows. Allosterically activated by GTP. Inhibited by UTP. Catalyzes the reversible phosphorylation of UMP to UDP. The protein is Uridylate kinase of Histophilus somni (strain 129Pt) (Haemophilus somnus).